Consider the following 449-residue polypeptide: MSLRFYNTLTRQKEAFTPIDPADVRVYACGPTVYDHLHIGNGRMLIVFDLLFRLLRHVYGKDHVRYVRNITDVDDKINARAAERGVDIRVLTDEMTAIFHEDAAGLGCLPPTVEPRATEHMAEMIAIIQKLIDKGAAYIAEGHVLFDVPAMPDYGALSKRPLDDMIAGARVEVAPYKRGPMDFVLWKPAAPSEPGWESPWGRGRPGWHIECSAMSWRHLGEVFDIHGGGIDLVFPHHENEIAQTRCAFGHSVMAHVWMHNGHLQVEGEKMSKSLGNFVTIHELLNSDSFGGRKWPGAVLRLAMLRTHYRQPIDFTVKALEEAERTLSEWRHAAEGAEPEAPDANFIDALSDDLNTPRAISELHALKAKRPGALLGGLALLGVDLADLGEEERALPRSAFEQIMALIAEREAARQHKNWAESDRLRDKLAAMGVVLKDNKGGATSWELKP.

Cys29 serves as a coordination point for Zn(2+). Positions 31 to 41 match the 'HIGH' region motif; that stretch reads PTVYDHLHIGN. Residues Cys211, His236, and Glu240 each coordinate Zn(2+). The 'KMSKS' region signature appears at 269–273; it reads KMSKS. Lys272 provides a ligand contact to ATP.

It belongs to the class-I aminoacyl-tRNA synthetase family. Monomer. Zn(2+) serves as cofactor.

The protein localises to the cytoplasm. It carries out the reaction tRNA(Cys) + L-cysteine + ATP = L-cysteinyl-tRNA(Cys) + AMP + diphosphate. This is Cysteine--tRNA ligase from Methylocella silvestris (strain DSM 15510 / CIP 108128 / LMG 27833 / NCIMB 13906 / BL2).